A 29-amino-acid chain; its full sequence is MDITSIAWGALMVVFTFSLSLVVWGRSGL.

The chain crosses the membrane as a helical span at residues 3–23 (ITSIAWGALMVVFTFSLSLVV).

It belongs to the PetN family. In terms of assembly, the 4 large subunits of the cytochrome b6-f complex are cytochrome b6, subunit IV (17 kDa polypeptide, PetD), cytochrome f and the Rieske protein, while the 4 small subunits are PetG, PetL, PetM and PetN. The complex functions as a dimer.

The protein localises to the plastid membrane. Functionally, component of the cytochrome b6-f complex, which mediates electron transfer between photosystem II (PSII) and photosystem I (PSI), cyclic electron flow around PSI, and state transitions. The chain is Cytochrome b6-f complex subunit 8 from Aneura mirabilis (Parasitic liverwort).